A 318-amino-acid polypeptide reads, in one-letter code: Very-long-chain 3-oxoacyl-CoA reductase-B (318 aa).

A helical membrane pass occupies residues 15–35; the sequence is FWYLGVVAATWWGLRAAWCLL. 54-83 is a binding site for NADP(+); it reads GKWAVVTGATDGIGKAYAEELARRGMNIVL. Transmembrane regions (helical) follow at residues 187-207 and 281-301; these read GVVLNISSASGMYPVPLLTVY and AITGWISTSLVPVSAAISMGM. Serine 194 contacts substrate. Catalysis depends on tyrosine 207, which acts as the Proton acceptor.

This sequence belongs to the short-chain dehydrogenases/reductases (SDR) family. 17-beta-HSD 3 subfamily.

The protein localises to the endoplasmic reticulum membrane. The enzyme catalyses a very-long-chain (3R)-3-hydroxyacyl-CoA + NADP(+) = a very-long-chain 3-oxoacyl-CoA + NADPH + H(+). It carries out the reaction 17beta-estradiol + NAD(+) = estrone + NADH + H(+). It catalyses the reaction 17beta-estradiol + NADP(+) = estrone + NADPH + H(+). It participates in lipid metabolism; fatty acid biosynthesis. The protein operates within steroid biosynthesis; estrogen biosynthesis. Its function is as follows. Catalyzes the second of the four reactions of the long-chain fatty acids elongation cycle. This endoplasmic reticulum-bound enzymatic process, allows the addition of two carbons to the chain of long- and very long-chain fatty acids/VLCFAs per cycle. This enzyme has a 3-ketoacyl-CoA reductase activity, reducing 3-ketoacyl-CoA to 3-hydroxyacyl-CoA, within each cycle of fatty acid elongation. Thereby, it may participate in the production of VLCFAs of different chain lengths that are involved in multiple biological processes as precursors of membrane lipids and lipid mediators. May also catalyze the transformation of estrone (E1) into estradiol (E2) and play a role in estrogen formation. The protein is Very-long-chain 3-oxoacyl-CoA reductase-B (hsd17b12-b) of Xenopus laevis (African clawed frog).